The following is a 119-amino-acid chain: Ribonuclease P protein component (119 aa).

Belongs to the RnpA family. In terms of assembly, consists of a catalytic RNA component (M1 or rnpB) and a protein subunit.

The enzyme catalyses Endonucleolytic cleavage of RNA, removing 5'-extranucleotides from tRNA precursor.. In terms of biological role, RNaseP catalyzes the removal of the 5'-leader sequence from pre-tRNA to produce the mature 5'-terminus. It can also cleave other RNA substrates such as 4.5S RNA. The protein component plays an auxiliary but essential role in vivo by binding to the 5'-leader sequence and broadening the substrate specificity of the ribozyme. This chain is Ribonuclease P protein component, found in Pediococcus pentosaceus (strain ATCC 25745 / CCUG 21536 / LMG 10740 / 183-1w).